The primary structure comprises 151 residues: Ribosomal RNA large subunit methyltransferase H (151 aa).

S-adenosyl-L-methionine-binding positions include Leu-73, Gly-100, and 119–124 (LTKLTL).

This sequence belongs to the RNA methyltransferase RlmH family. As to quaternary structure, homodimer.

The protein localises to the cytoplasm. It catalyses the reaction pseudouridine(1915) in 23S rRNA + S-adenosyl-L-methionine = N(3)-methylpseudouridine(1915) in 23S rRNA + S-adenosyl-L-homocysteine + H(+). In terms of biological role, specifically methylates the pseudouridine at position 1915 (m3Psi1915) in 23S rRNA. This chain is Ribosomal RNA large subunit methyltransferase H, found in Campylobacter hominis (strain ATCC BAA-381 / DSM 21671 / CCUG 45161 / LMG 19568 / NCTC 13146 / CH001A).